A 379-amino-acid chain; its full sequence is Spermidine/putrescine import ATP-binding protein PotA (379 aa).

An ABC transporter domain is found at 10–240; it reads VTIDQVSKAY…PATDFVAKFI (231 aa). Residue 42 to 49 coordinates ATP; sequence GPSGCGKT.

The protein belongs to the ABC transporter superfamily. Spermidine/putrescine importer (TC 3.A.1.11.1) family. As to quaternary structure, the complex is composed of two ATP-binding proteins (PotA), two transmembrane proteins (PotB and PotC) and a solute-binding protein (PotD).

It localises to the cell inner membrane. It carries out the reaction ATP + H2O + polyamine-[polyamine-binding protein]Side 1 = ADP + phosphate + polyamineSide 2 + [polyamine-binding protein]Side 1.. Part of the ABC transporter complex PotABCD involved in spermidine/putrescine import. Responsible for energy coupling to the transport system. In Treponema pallidum (strain Nichols), this protein is Spermidine/putrescine import ATP-binding protein PotA.